The primary structure comprises 297 residues: Protoheme IX farnesyltransferase (297 aa).

The next 9 membrane-spanning stretches (helical) occupy residues 23-43 (VTQL…PGMP), 49-69 (VFGT…NCLI), 93-113 (IQVL…LYHL), 117-137 (LTMW…TVIL), 144-164 (NIVI…AAVA), 171-191 (AWVL…ALAL), 215-235 (RLHI…PYAI), 238-258 (SGAL…WYAW), and 275-295 (FSIL…WVGL).

The protein belongs to the UbiA prenyltransferase family. Protoheme IX farnesyltransferase subfamily.

It localises to the cell inner membrane. It catalyses the reaction heme b + (2E,6E)-farnesyl diphosphate + H2O = Fe(II)-heme o + diphosphate. It functions in the pathway porphyrin-containing compound metabolism; heme O biosynthesis; heme O from protoheme: step 1/1. Functionally, converts heme B (protoheme IX) to heme O by substitution of the vinyl group on carbon 2 of heme B porphyrin ring with a hydroxyethyl farnesyl side group. The protein is Protoheme IX farnesyltransferase of Bordetella pertussis (strain Tohama I / ATCC BAA-589 / NCTC 13251).